A 308-amino-acid polypeptide reads, in one-letter code: UDP-3-O-acyl-N-acetylglucosamine deacetylase (308 aa).

Residues His77, His233, and Asp237 each coordinate Zn(2+). His260 acts as the Proton donor in catalysis.

It belongs to the LpxC family. The cofactor is Zn(2+).

The catalysed reaction is a UDP-3-O-[(3R)-3-hydroxyacyl]-N-acetyl-alpha-D-glucosamine + H2O = a UDP-3-O-[(3R)-3-hydroxyacyl]-alpha-D-glucosamine + acetate. It functions in the pathway glycolipid biosynthesis; lipid IV(A) biosynthesis; lipid IV(A) from (3R)-3-hydroxytetradecanoyl-[acyl-carrier-protein] and UDP-N-acetyl-alpha-D-glucosamine: step 2/6. Catalyzes the hydrolysis of UDP-3-O-myristoyl-N-acetylglucosamine to form UDP-3-O-myristoylglucosamine and acetate, the committed step in lipid A biosynthesis. The protein is UDP-3-O-acyl-N-acetylglucosamine deacetylase of Nitratidesulfovibrio vulgaris (strain ATCC 29579 / DSM 644 / CCUG 34227 / NCIMB 8303 / VKM B-1760 / Hildenborough) (Desulfovibrio vulgaris).